We begin with the raw amino-acid sequence, 333 residues long: L-lactate dehydrogenase A chain (333 aa).

NAD(+)-binding positions include 30 to 58 (GAVGMACAMSILMKDLADELALVDVIEDK) and Arg100. Substrate contacts are provided by Arg107, Asn139, and Arg170. Asn139 contacts NAD(+). His194 (proton acceptor) is an active-site residue. Thr249 is a substrate binding site.

Belongs to the LDH/MDH superfamily. LDH family. Homotetramer.

Its subcellular location is the cytoplasm. The catalysed reaction is (S)-lactate + NAD(+) = pyruvate + NADH + H(+). Its pathway is fermentation; pyruvate fermentation to lactate; (S)-lactate from pyruvate: step 1/1. Its function is as follows. Interconverts simultaneously and stereospecifically pyruvate and lactate with concomitant interconversion of NADH and NAD(+). The protein is L-lactate dehydrogenase A chain (LDHA) of Ambystoma mexicanum (Axolotl).